Reading from the N-terminus, the 79-residue chain is D-alanyl carrier protein (79 aa).

One can recognise a Carrier domain in the interval 1–77 (MDVKAEVIEI…KIVEGVTELR (77 aa)). Serine 35 is subject to O-(pantetheine 4'-phosphoryl)serine.

This sequence belongs to the DltC family. 4'-phosphopantetheine is transferred from CoA to a specific serine of apo-DCP.

Its subcellular location is the cytoplasm. The protein operates within cell wall biogenesis; lipoteichoic acid biosynthesis. Carrier protein involved in the D-alanylation of lipoteichoic acid (LTA). The loading of thioester-linked D-alanine onto DltC is catalyzed by D-alanine--D-alanyl carrier protein ligase DltA. The DltC-carried D-alanyl group is further transferred to cell membrane phosphatidylglycerol (PG) by forming an ester bond, probably catalyzed by DltD. D-alanylation of LTA plays an important role in modulating the properties of the cell wall in Gram-positive bacteria, influencing the net charge of the cell wall. The sequence is that of D-alanyl carrier protein from Streptococcus gordonii (strain Challis / ATCC 35105 / BCRC 15272 / CH1 / DL1 / V288).